A 255-amino-acid polypeptide reads, in one-letter code: uncharacterized protein (255 aa).

The 56-residue stretch at 3-58 (PVERRQIILEMVAEKGIVSIAELTDRMNVSHMTIRRDLQKLEQQGAVVLVSGGVQS) folds into the HTH deoR-type domain. Positions 20-39 (VSIAELTDRMNVSHMTIRRD) form a DNA-binding region, H-T-H motif.

This is an uncharacterized protein from Escherichia coli (strain K12).